The chain runs to 382 residues: Mannitol-1-phosphate 5-dehydrogenase (382 aa).

3–14 lines the NAD(+) pocket; the sequence is ALHFGAGNIGRG. K269 bears the N6-acetyllysine mark.

This sequence belongs to the mannitol dehydrogenase family.

It carries out the reaction D-mannitol 1-phosphate + NAD(+) = beta-D-fructose 6-phosphate + NADH + H(+). The protein is Mannitol-1-phosphate 5-dehydrogenase of Shigella sonnei (strain Ss046).